A 371-amino-acid polypeptide reads, in one-letter code: Mitogen-activated protein kinase homolog NTF6 (371 aa).

The Protein kinase domain occupies 38 to 324; sequence IPPIQPVGRG…VEDALNHPFL (287 aa). ATP contacts are provided by residues 44-52 and lysine 67; that span reads VGRGAYGMV. Aspartate 164 (proton acceptor) is an active-site residue. Phosphothreonine is present on threonine 196. The TXY signature appears at 196-198; that stretch reads TEY. A Phosphotyrosine modification is found at tyrosine 198.

The protein belongs to the protein kinase superfamily. CMGC Ser/Thr protein kinase family. MAP kinase subfamily. The cofactor is Mg(2+). In terms of processing, dually phosphorylated on Thr-196 and Tyr-198, which activates the enzyme. Very low autophosphorylation, although dramatically increased when Mn(2+) is added to the reaction instead of Mg(2+).

It carries out the reaction L-seryl-[protein] + ATP = O-phospho-L-seryl-[protein] + ADP + H(+). The catalysed reaction is L-threonyl-[protein] + ATP = O-phospho-L-threonyl-[protein] + ADP + H(+). Its activity is regulated as follows. Activated by tyrosine and threonine phosphorylation. The chain is Mitogen-activated protein kinase homolog NTF6 (NTF6) from Nicotiana tabacum (Common tobacco).